The sequence spans 146 residues: Bradykinin-like neuropeptide (146 aa).

The signal sequence occupies residues 1 to 24; it reads MTSSIYGFITLSVVALISQTTCRS. 2 propeptides span residues 25–80 and 92–146; these read LDLL…LMEA and LRSY…FRYG.

Neuron L5.

It is found in the secreted. In terms of biological role, may have important functions in renal physiology and in animal behavior, as does bradykinin. This is Bradykinin-like neuropeptide (LUQ-1) from Aplysia californica (California sea hare).